We begin with the raw amino-acid sequence, 170 residues long: AP-5 complex subunit sigma-1 (170 aa).

Probably part of the adaptor protein complex 5 (AP-5) a tetramer composed of AP5B1, AP5M1, AP5S1 and AP5Z1. Interacts with ZFYVE26 and SPG11.

It localises to the cytoplasm. The protein localises to the cytosol. It is found in the late endosome membrane. Its subcellular location is the lysosome membrane. Its function is as follows. As part of AP-5, a probable fifth adaptor protein complex it may be involved in endosomal transport. This is AP-5 complex subunit sigma-1 (Ap5s1) from Mus musculus (Mouse).